A 355-amino-acid polypeptide reads, in one-letter code: Peptide chain release factor 1 (355 aa).

Q231 carries the N5-methylglutamine modification.

Belongs to the prokaryotic/mitochondrial release factor family. Methylated by PrmC. Methylation increases the termination efficiency of RF1.

The protein resides in the cytoplasm. Peptide chain release factor 1 directs the termination of translation in response to the peptide chain termination codons UAG and UAA. In Sulfurovum sp. (strain NBC37-1), this protein is Peptide chain release factor 1.